A 516-amino-acid chain; its full sequence is Glycerol-3-phosphate dehydrogenase 1 (516 aa).

28–56 lines the FAD pocket; sequence DVIVIGGGITGVGIALDAATRGLTVALVE.

It belongs to the FAD-dependent glycerol-3-phosphate dehydrogenase family. It depends on FAD as a cofactor.

It localises to the cytoplasm. It carries out the reaction a quinone + sn-glycerol 3-phosphate = dihydroxyacetone phosphate + a quinol. The sequence is that of Glycerol-3-phosphate dehydrogenase 1 (glpD1) from Mycobacterium bovis (strain ATCC BAA-935 / AF2122/97).